The following is a 319-amino-acid chain: Aspartate carbamoyltransferase catalytic subunit (319 aa).

2 residues coordinate carbamoyl phosphate: arginine 55 and threonine 56. Lysine 83 is an L-aspartate binding site. Carbamoyl phosphate-binding residues include arginine 105, histidine 144, and glutamine 147. L-aspartate contacts are provided by arginine 177 and arginine 231. Residues glycine 272 and proline 273 each contribute to the carbamoyl phosphate site.

Belongs to the aspartate/ornithine carbamoyltransferase superfamily. ATCase family. As to quaternary structure, heterododecamer (2C3:3R2) of six catalytic PyrB chains organized as two trimers (C3), and six regulatory PyrI chains organized as three dimers (R2).

The enzyme catalyses carbamoyl phosphate + L-aspartate = N-carbamoyl-L-aspartate + phosphate + H(+). The protein operates within pyrimidine metabolism; UMP biosynthesis via de novo pathway; (S)-dihydroorotate from bicarbonate: step 2/3. In terms of biological role, catalyzes the condensation of carbamoyl phosphate and aspartate to form carbamoyl aspartate and inorganic phosphate, the committed step in the de novo pyrimidine nucleotide biosynthesis pathway. This Nocardia farcinica (strain IFM 10152) protein is Aspartate carbamoyltransferase catalytic subunit.